The chain runs to 442 residues: Trigger factor (442 aa).

In terms of domain architecture, PPIase FKBP-type spans 165 to 250; that stretch reads DDRVIIDFEG…LQKVMAPELP (86 aa).

This sequence belongs to the FKBP-type PPIase family. Tig subfamily.

It localises to the cytoplasm. It carries out the reaction [protein]-peptidylproline (omega=180) = [protein]-peptidylproline (omega=0). In terms of biological role, involved in protein export. Acts as a chaperone by maintaining the newly synthesized protein in an open conformation. Functions as a peptidyl-prolyl cis-trans isomerase. This chain is Trigger factor, found in Coxiella burnetii (strain CbuK_Q154) (Coxiella burnetii (strain Q154)).